The chain runs to 345 residues: Uroporphyrinogen decarboxylase (345 aa).

Substrate contacts are provided by residues 26–30 (RQAGR), Phe45, Asp75, Tyr151, Ser206, and His320.

It belongs to the uroporphyrinogen decarboxylase family. As to quaternary structure, homodimer.

The protein resides in the cytoplasm. The enzyme catalyses uroporphyrinogen III + 4 H(+) = coproporphyrinogen III + 4 CO2. Its pathway is porphyrin-containing compound metabolism; protoporphyrin-IX biosynthesis; coproporphyrinogen-III from 5-aminolevulinate: step 4/4. Its function is as follows. Catalyzes the decarboxylation of four acetate groups of uroporphyrinogen-III to yield coproporphyrinogen-III. In Staphylococcus carnosus (strain TM300), this protein is Uroporphyrinogen decarboxylase.